A 313-amino-acid polypeptide reads, in one-letter code: Ribosomal RNA small subunit methyltransferase H (313 aa).

S-adenosyl-L-methionine contacts are provided by residues 35–37 (GGH), D55, F79, D100, and Q107.

Belongs to the methyltransferase superfamily. RsmH family.

The protein resides in the cytoplasm. The catalysed reaction is cytidine(1402) in 16S rRNA + S-adenosyl-L-methionine = N(4)-methylcytidine(1402) in 16S rRNA + S-adenosyl-L-homocysteine + H(+). Specifically methylates the N4 position of cytidine in position 1402 (C1402) of 16S rRNA. The protein is Ribosomal RNA small subunit methyltransferase H of Burkholderia multivorans (strain ATCC 17616 / 249).